We begin with the raw amino-acid sequence, 502 residues long: 4-hydroxy-3-methylbut-2-enyl diphosphate reductase, chloroplastic (502 aa).

A chloroplast-targeting transit peptide spans 1-48 (MQVLPQTRVQGVPSGRNLSCSKAVGGTPLRALTRDVVRPARSVNVHVV). Cys140 contacts [4Fe-4S] cluster. Residue His170 participates in (2E)-4-hydroxy-3-methylbut-2-enyl diphosphate binding. [4Fe-4S] cluster is bound at residue Cys232. His260 contributes to the (2E)-4-hydroxy-3-methylbut-2-enyl diphosphate binding site. The Proton donor role is filled by Glu262. Residue Thr325 coordinates (2E)-4-hydroxy-3-methylbut-2-enyl diphosphate. Residue Cys363 participates in [4Fe-4S] cluster binding. (2E)-4-hydroxy-3-methylbut-2-enyl diphosphate-binding positions include 398–400 (SSN) and Ser461.

It belongs to the IspH family. In terms of assembly, homodimer. It depends on [4Fe-4S] cluster as a cofactor.

The protein localises to the plastid. It localises to the chloroplast stroma. It catalyses the reaction dimethylallyl diphosphate + 2 oxidized [2Fe-2S]-[ferredoxin] + H2O = (2E)-4-hydroxy-3-methylbut-2-enyl diphosphate + 2 reduced [2Fe-2S]-[ferredoxin] + 2 H(+). The catalysed reaction is isopentenyl diphosphate + 2 oxidized [2Fe-2S]-[ferredoxin] + H2O = (2E)-4-hydroxy-3-methylbut-2-enyl diphosphate + 2 reduced [2Fe-2S]-[ferredoxin] + 2 H(+). Its pathway is isoprenoid biosynthesis; dimethylallyl diphosphate biosynthesis; dimethylallyl diphosphate from (2E)-4-hydroxy-3-methylbutenyl diphosphate: step 1/1. The protein operates within isoprenoid biosynthesis; isopentenyl diphosphate biosynthesis via DXP pathway; isopentenyl diphosphate from 1-deoxy-D-xylulose 5-phosphate: step 6/6. In terms of biological role, enzyme of the plastid non-mevalonate pathway for isoprenoid biosynthesis that converts 1-hydroxy-2-methyl-2-(E)-butenyl 4-diphosphate into isopentenyl diphosphate (IPP) and dimethylallyl diphosphate (DMAPP). The protein is 4-hydroxy-3-methylbut-2-enyl diphosphate reductase, chloroplastic of Botryococcus braunii (Green alga).